Reading from the N-terminus, the 461-residue chain is Bifunctional protein GlmU (461 aa).

The tract at residues 1 to 235 is pyrophosphorylase; the sequence is MTDTRKQRAA…EDDLIGCDSK (235 aa). UDP-N-acetyl-alpha-D-glucosamine contacts are provided by residues 13–16, Lys-27, Gln-80, 85–86, 108–110, Gly-146, Glu-161, and Asn-176; these read LAAG, GT, and YGD. Asp-110 is a binding site for Mg(2+). Positions 236–256 are linker; sequence ADLAEAEAIFQQKRRRALMEA. Positions 257-461 are N-acetyltransferase; that stretch reads GVTMVAPETV…ARTTDQNKKG (205 aa). Positions 322 and 340 each coordinate UDP-N-acetyl-alpha-D-glucosamine. The active-site Proton acceptor is His-352. Residues Tyr-355 and Asn-366 each contribute to the UDP-N-acetyl-alpha-D-glucosamine site. Residues Ala-369, 375–376, Ser-394, Ser-412, and Arg-429 each bind acetyl-CoA; that span reads NY.

In the N-terminal section; belongs to the N-acetylglucosamine-1-phosphate uridyltransferase family. It in the C-terminal section; belongs to the transferase hexapeptide repeat family. As to quaternary structure, homotrimer. Requires Mg(2+) as cofactor.

Its subcellular location is the cytoplasm. The catalysed reaction is alpha-D-glucosamine 1-phosphate + acetyl-CoA = N-acetyl-alpha-D-glucosamine 1-phosphate + CoA + H(+). It catalyses the reaction N-acetyl-alpha-D-glucosamine 1-phosphate + UTP + H(+) = UDP-N-acetyl-alpha-D-glucosamine + diphosphate. It participates in nucleotide-sugar biosynthesis; UDP-N-acetyl-alpha-D-glucosamine biosynthesis; N-acetyl-alpha-D-glucosamine 1-phosphate from alpha-D-glucosamine 6-phosphate (route II): step 2/2. The protein operates within nucleotide-sugar biosynthesis; UDP-N-acetyl-alpha-D-glucosamine biosynthesis; UDP-N-acetyl-alpha-D-glucosamine from N-acetyl-alpha-D-glucosamine 1-phosphate: step 1/1. Its pathway is bacterial outer membrane biogenesis; LPS lipid A biosynthesis. In terms of biological role, catalyzes the last two sequential reactions in the de novo biosynthetic pathway for UDP-N-acetylglucosamine (UDP-GlcNAc). The C-terminal domain catalyzes the transfer of acetyl group from acetyl coenzyme A to glucosamine-1-phosphate (GlcN-1-P) to produce N-acetylglucosamine-1-phosphate (GlcNAc-1-P), which is converted into UDP-GlcNAc by the transfer of uridine 5-monophosphate (from uridine 5-triphosphate), a reaction catalyzed by the N-terminal domain. The chain is Bifunctional protein GlmU from Hyphomonas neptunium (strain ATCC 15444).